A 501-amino-acid chain; its full sequence is Mitogen-activated protein kinase MKC1 (501 aa).

In terms of domain architecture, Protein kinase spans 28–339 (FKIVKELGHG…VRDALNHKYL (312 aa)). Residues 34–42 (LGHGAYGIV) and Lys74 each bind ATP. Asp174 serves as the catalytic Proton acceptor. Position 211 is a phosphothreonine (Thr211). A TXY motif is present at residues 211–213 (TEY). A Phosphotyrosine modification is found at Tyr213. The segment at 400–450 (MQKREEQRQEEEEKELLEQQRQFPAQESMDISQTPYNNLETNIGTPQVEDD) is disordered. Positions 422 to 444 (FPAQESMDISQTPYNNLETNIGT) are enriched in polar residues.

Belongs to the protein kinase superfamily. CMGC Ser/Thr protein kinase family. MAP kinase subfamily. Mg(2+) serves as cofactor. In terms of processing, dually phosphorylated on Thr-211 and Tyr-213, which activates the enzyme.

It carries out the reaction L-seryl-[protein] + ATP = O-phospho-L-seryl-[protein] + ADP + H(+). The enzyme catalyses L-threonyl-[protein] + ATP = O-phospho-L-threonyl-[protein] + ADP + H(+). Activated by tyrosine and threonine phosphorylation. This chain is Mitogen-activated protein kinase MKC1 (MKC1), found in Candida albicans (Yeast).